Reading from the N-terminus, the 448-residue chain is Exodeoxyribonuclease 7 large subunit (448 aa).

Belongs to the XseA family. As to quaternary structure, heterooligomer composed of large and small subunits.

The protein resides in the cytoplasm. It catalyses the reaction Exonucleolytic cleavage in either 5'- to 3'- or 3'- to 5'-direction to yield nucleoside 5'-phosphates.. Functionally, bidirectionally degrades single-stranded DNA into large acid-insoluble oligonucleotides, which are then degraded further into small acid-soluble oligonucleotides. This Alcanivorax borkumensis (strain ATCC 700651 / DSM 11573 / NCIMB 13689 / SK2) protein is Exodeoxyribonuclease 7 large subunit.